The following is a 151-amino-acid chain: D-aminoacyl-tRNA deacylase (151 aa).

The Gly-cisPro motif, important for rejection of L-amino acids signature appears at 136–137 (GP).

The protein belongs to the DTD family. In terms of assembly, homodimer.

It is found in the cytoplasm. It catalyses the reaction glycyl-tRNA(Ala) + H2O = tRNA(Ala) + glycine + H(+). The enzyme catalyses a D-aminoacyl-tRNA + H2O = a tRNA + a D-alpha-amino acid + H(+). An aminoacyl-tRNA editing enzyme that deacylates mischarged D-aminoacyl-tRNAs. Also deacylates mischarged glycyl-tRNA(Ala), protecting cells against glycine mischarging by AlaRS. Acts via tRNA-based rather than protein-based catalysis; rejects L-amino acids rather than detecting D-amino acids in the active site. By recycling D-aminoacyl-tRNA to D-amino acids and free tRNA molecules, this enzyme counteracts the toxicity associated with the formation of D-aminoacyl-tRNA entities in vivo and helps enforce protein L-homochirality. This Lactococcus lactis subsp. lactis (strain IL1403) (Streptococcus lactis) protein is D-aminoacyl-tRNA deacylase.